Here is a 508-residue protein sequence, read N- to C-terminus: Bestrophin-2 (508 aa).

At 1–31 (MTVTYTARVANARFGGFSQLLLLWRGSIYKL) the chain is on the cytoplasmic side. Ala10 provides a ligand contact to Ca(2+). Residues 32-51 (LWRELLCFLGLYMALSAAYR) traverse the membrane as a helical segment. At 52–60 (FLLAEEQKR) the chain is on the extracellular side. Residues 61–82 (YFEKLVIYCDQYASLIPVSFVL) form a helical membrane-spanning segment. Topologically, residues 83-238 (GFYVTLVVHR…WISIPLVYTQ (156 aa)) are cytoplasmic. Residues 239-255 (VVTIAVYSYFLACLIGR) form a helical membrane-spanning segment. At 256–274 (QFLDPAQGYKDHTLDLCVP) the chain is on the extracellular side. Residues 275-288 (IFTLLQFFFYAGWL) traverse the membrane as a helical segment. Over 289–508 (KVAEQLINPF…PIGEEEESPA (220 aa)) the chain is Cytoplasmic. The Ca(2+) site is built by Gln293, Asn296, Asp301, and Asp304. Residues 455–508 (LREPELEPPACPEPPAPIPGPTPEPFTTVSIPGPRAPAPPWLPSPIGEEEESPA) form a disordered region. Composition is skewed to pro residues over residues 461 to 478 (EPPA…PTPE) and 488 to 497 (PRAPAPPWLP).

The protein belongs to the anion channel-forming bestrophin (TC 1.A.46) family. Calcium-sensitive chloride channel subfamily. Pentamer. Interacts with GLUL; this interaction tethers a fraction of GLUL to the membrane, causing a decrease of cytosolic glutamine synthase (GS) activity and inhibits the chloride channel activity of BEST2 by affecting the gating at the aperture in the absence of intracellular glutamate. Expressed in mucin-secreting colonic goblet cells.

The protein resides in the cell membrane. It is found in the basolateral cell membrane. It carries out the reaction chloride(in) = chloride(out). The enzyme catalyses hydrogencarbonate(in) = hydrogencarbonate(out). It catalyses the reaction L-glutamate(out) = L-glutamate(in). The catalysed reaction is iodide(out) = iodide(in). It carries out the reaction L-glutamine(out) = L-glutamine(in). Its activity is regulated as follows. Chloride channel activity is allosterically inhibited by GLUL/glutamine synthase (GS) which affects the gating at the aperture in the absence of intracellular glutamate. Inhibitory effect of GLUL is relieved upon increasing of intracellular level of L-glutamate. Ligand-gated anion channel that allows the movement of anions across cell membranes when activated by calcium (Ca2+). Transports a large specter of anions, namely mediates the movement of chloride, L-glutamate and iodide. Calcium-binding triggers the dilation of the aperture, but calcium-dependent gating is only effective when the size of the passing anion is bigger than the closed aperture. Mediates the calcium-activated hydrogencarbonate movement and participates in colonic hydrogencarbonate secretion concomitant with mucin secretion. In non-pigmented epithelium (NPE), mediates the efflux of intracellular L-glutamate; binding of intracellular L-glutamate activates and open both the neck and the aperture of the channel, leading to L-glutamate exit promoting chloride influx movement from the extracellular side in trans. Also exhibits a directional permeability for intracellular glutamine, in a similar manner as for L-glutamate. This chain is Bestrophin-2, found in Mus musculus (Mouse).